Consider the following 162-residue polypeptide: Putative pre-16S rRNA nuclease (162 aa).

Belongs to the YqgF nuclease family.

It localises to the cytoplasm. Could be a nuclease involved in processing of the 5'-end of pre-16S rRNA. This is Putative pre-16S rRNA nuclease from Brucella abortus (strain S19).